The chain runs to 204 residues: Protein PAXX (204 aa).

The PISA domain maps to 37–79; the sequence is FNLYVTDAAELWSTCFTPDSLAALKARFGLSAAEDITPRFRAA. Serine 134 is subject to Phosphoserine. The disordered stretch occupies residues 143–204; that stretch reads EETAVSPRKS…PAGGVDFDET (62 aa). Position 145 is a phosphothreonine (threonine 145). Serine 148 and serine 152 each carry phosphoserine. A mediates interaction with XRCC5/Ku80 and XRCC6/Ku70 and association with the non-homologous end joining core complex region spans residues 171-204; it reads GPGPGVRRRCPGESLINPGFKSKKPAGGVDFDET. An XLM motif is present at residues 190-204; sequence FKSKKPAGGVDFDET.

This sequence belongs to the XRCC4-XLF family. PAXX subfamily. As to quaternary structure, homodimer. Interacts with the DNA-bound XRCC5/Ku80 and XRCC6/Ku70 heterodimer (Ku complex); the interaction is direct. Associated component of the non-homologous end joining (NHEJ) complex, composed of the core proteins PRKDC, LIG4, XRCC4, XRCC6/Ku70, XRCC5/Ku86 and NHEJ1/XLF. Interacts with POLL (DNA polymerase lambda); promoting POLL recruitment to double-strand breaks (DSBs) and stimulation of the end-filling activity of POLL. In terms of processing, phosphorylation may inhibit interaction with the DNA-bound XRCC5/Ku80 and XRCC6/Ku70 heterodimer (Ku complex).

The protein localises to the nucleus. It is found in the chromosome. Its subcellular location is the cytoplasm. Non-essential DNA repair protein involved in DNA non-homologous end joining (NHEJ); participates in double-strand break (DSB) repair and V(D)J recombination. May act as a scaffold required for accumulation of the Ku heterodimer, composed of XRCC5/Ku80 and XRCC6/Ku70, at double-strand break sites and promote the assembly and/or stability of the NHEJ machinery. Involved in NHEJ by promoting the ligation of blunt-ended DNA ends. Together with NHEJ1/XLF, collaborates with DNA polymerase lambda (POLL) to promote joining of non-cohesive DNA ends. Constitutes a non-essential component of classical NHEJ: has a complementary but distinct function with NHEJ1/XLF in DNA repair. Able to restrict infection by herpesvirus 1 (HSV-1) via an unknown mechanism. The chain is Protein PAXX from Homo sapiens (Human).